A 442-amino-acid polypeptide reads, in one-letter code: MAATDLERVSSAEPEPRSLSLGGHVGFDSLPDQLVSKSVTQGFSFNILCVGETGIGKSTLMNTLFNTTFETEEASHHEACVRLRPQTYDLQESNVHLKLTIVDAVGFGDQINKDESYRPIVDYIDAQFENYLQEELKIRRSLFDYHDTRIHVCLYFITPTGHSLKSLDLVTMKKLDSKVNIIPIIAKADTISKSELHKFKIKIMGELVSNGVQIYQFPTDDEAVAEINAVMNAHLPFAVVGSTEEVKVGNKLVRARQYPWGVVQVENENHCDFVKLREMLIRVNMEDLREQTHSRHYELYRRCKLEEMGFQDSDGDSQPFSLQETYEAKRKEFLSELQRKEEEMRQMFVNKVKETELELKEKERELHEKFEHLKRVHQEEKRKVEEKRRELEEETNAFNRRKAAVEALQSQALHATSQQPLRKDKDKKKASGWSSIYSVTIP.

A compositionally biased stretch (basic and acidic residues) spans 1–16 (MAATDLERVSSAEPEP). The segment at 1-23 (MAATDLERVSSAEPEPRSLSLGG) is disordered. At A2 the chain carries N-acetylalanine. Phosphoserine is present on S10. The 267-residue stretch at 41–307 (QGFSFNILCV…ELYRRCKLEE (267 aa)) folds into the Septin-type G domain. Residues 51–58 (GETGIGKS) are G1 motif. GTP is bound by residues 51–58 (GETGIGKS), G106, 187–195 (KADTISKSE), G241, and R256. Residues 103-106 (DAVG) are G3 motif. Residues 186 to 189 (AKAD) are G4 motif. The stretch at 322 to 410 (LQETYEAKRK…RKAAVEALQS (89 aa)) forms a coiled coil. Over residues 377–391 (HQEEKRKVEEKRREL) the composition is skewed to basic and acidic residues. The interval 377–442 (HQEEKRKVEE…WSSIYSVTIP (66 aa)) is disordered. Polar residues-rich tracts occupy residues 408 to 420 (LQSQ…SQQP) and 432 to 442 (GWSSIYSVTIP).

The protein belongs to the TRAFAC class TrmE-Era-EngA-EngB-Septin-like GTPase superfamily. Septin GTPase family. Septins polymerize into heterooligomeric protein complexes that form filaments, and can associate with cellular membranes, actin filaments and microtubules. GTPase activity is required for filament formation. Interacts with CDK14, SEPTIN4, SEPTIN5 and SEPTIN7. Interacts with VAMP2; the interaction inhibits interaction of VAMP2 with SYP. Interacts with STX1A.

Its subcellular location is the cytoplasm. It localises to the cytoskeleton. The protein resides in the synapse. The protein localises to the cell projection. It is found in the axon. Its subcellular location is the cytoplasmic vesicle. It localises to the secretory vesicle. The protein resides in the synaptic vesicle membrane. The protein localises to the presynapse. Filament-forming cytoskeletal GTPase. May play a role in platelet secretion. Seems to participate in the process of SNARE complex formation in synaptic vesicles. The sequence is that of Septin-8 from Otolemur garnettii (Small-eared galago).